Consider the following 261-residue polypeptide: 2,3-dihydro-2,3-dihydroxybenzoate dehydrogenase (261 aa).

12–36 (FITGAAQGIGEAVARTLASQGAHIA) contacts NAD(+). A substrate-binding site is contributed by Ser144. Tyr157 functions as the Proton acceptor in the catalytic mechanism.

The protein belongs to the short-chain dehydrogenases/reductases (SDR) family.

It is found in the cytoplasm. The enzyme catalyses (2S,3S)-2,3-dihydroxy-2,3-dihydrobenzoate + NAD(+) = 2,3-dihydroxybenzoate + NADH + H(+). The protein operates within siderophore biosynthesis; bacillibactin biosynthesis. The sequence is that of 2,3-dihydro-2,3-dihydroxybenzoate dehydrogenase (dhbA) from Bacillus subtilis (strain 168).